A 197-amino-acid chain; its full sequence is FMN-dependent NADH:quinone oxidoreductase (197 aa).

FMN-binding positions include Ser10 and 17-19 (SFS).

This sequence belongs to the azoreductase type 1 family. Homodimer. FMN is required as a cofactor.

The enzyme catalyses 2 a quinone + NADH + H(+) = 2 a 1,4-benzosemiquinone + NAD(+). The catalysed reaction is N,N-dimethyl-1,4-phenylenediamine + anthranilate + 2 NAD(+) = 2-(4-dimethylaminophenyl)diazenylbenzoate + 2 NADH + 2 H(+). In terms of biological role, quinone reductase that provides resistance to thiol-specific stress caused by electrophilic quinones. Functionally, also exhibits azoreductase activity. Catalyzes the reductive cleavage of the azo bond in aromatic azo compounds to the corresponding amines. This chain is FMN-dependent NADH:quinone oxidoreductase, found in Mycoplasmoides gallisepticum (strain R(low / passage 15 / clone 2)) (Mycoplasma gallisepticum).